A 418-amino-acid chain; its full sequence is Voltage-gated ClC-type chloride channel ClcB (418 aa).

The next 10 helical transmembrane spans lie at 5–25, 54–74, 146–166, 168–188, 222–242, 258–278, 291–311, 316–336, 352–372, and 380–400; these read LLIA…FRHA, LLTP…WQKF, LWIA…PLAG, LFIA…PVII, ALII…LTLM, WQLA…PAVW, APPL…AVLA, GAPG…GMLY, LLLG…APIM, and MTGE…ASVI.

Belongs to the chloride channel (TC 2.A.49) family. ClcB subfamily.

It localises to the cell inner membrane. Functionally, probably acts as an electrical shunt for an outwardly-directed proton pump that is linked to amino acid decarboxylation, as part of the extreme acid resistance (XAR) response. In Escherichia coli (strain SMS-3-5 / SECEC), this protein is Voltage-gated ClC-type chloride channel ClcB.